Reading from the N-terminus, the 320-residue chain is rRNA methyltransferase 2, mitochondrial (320 aa).

Residues M1–R18 constitute a mitochondrion transit peptide. Residues P83–W86, D104, D178–I179, and D203 each bind S-adenosyl-L-methionine. K264 serves as the catalytic Proton acceptor.

It belongs to the class I-like SAM-binding methyltransferase superfamily. RNA methyltransferase RlmE family.

It is found in the mitochondrion. The catalysed reaction is uridine(2791) in 21S rRNA + S-adenosyl-L-methionine = 2'-O-methyluridine(2791) in 21S rRNA + S-adenosyl-L-homocysteine + H(+). In terms of biological role, S-adenosyl-L-methionine-dependent 2'-O-ribose methyltransferase that catalyzes the formation of 2'-O-methyluridine at position 2791 (Um2791) in the 21S mitochondrial large subunit ribosomal RNA (mtLSU rRNA), a universally conserved modification in the peptidyl transferase domain of the mtLSU rRNA. The chain is rRNA methyltransferase 2, mitochondrial from Saccharomyces cerevisiae (strain ATCC 204508 / S288c) (Baker's yeast).